The chain runs to 308 residues: Transaldolase (308 aa).

Lysine 125 serves as the catalytic Schiff-base intermediate with substrate.

The protein belongs to the transaldolase family. Type 1 subfamily. As to quaternary structure, homodimer.

It localises to the cytoplasm. It carries out the reaction D-sedoheptulose 7-phosphate + D-glyceraldehyde 3-phosphate = D-erythrose 4-phosphate + beta-D-fructose 6-phosphate. Its pathway is carbohydrate degradation; pentose phosphate pathway; D-glyceraldehyde 3-phosphate and beta-D-fructose 6-phosphate from D-ribose 5-phosphate and D-xylulose 5-phosphate (non-oxidative stage): step 2/3. Transaldolase is important for the balance of metabolites in the pentose-phosphate pathway. The polypeptide is Transaldolase (Stutzerimonas stutzeri (strain A1501) (Pseudomonas stutzeri)).